The primary structure comprises 488 residues: Annexin A7 (488 aa).

Residues 1-18 (MSYPGYPPTGYPPFPGYP) show a composition bias toward pro residues. Disordered stretches follow at residues 1–49 (MSYP…YPQV) and 71–143 (GYPG…PTYP). A repeat-rich region region spans residues 1-143 (MSYPGYPPTG…QYPGGQPTYP (143 aa)). Positions 5–20 (GYPPTGYPPFPGYPPA) are 3 X 5 AA tandem repeats of G-Y-P-P-X. Gly residues predominate over residues 89-102 (PGQGFGVPPGGAGF). Annexin repeat units lie at residues 185-256 (FDAI…ALFM), 257-328 (PPTY…SMCQ), 340-412 (QMAQ…TILQ), and 416-487 (NRPA…AIVG). The residue at position 233 (Lys233) is an N6-acetyllysine.

The protein belongs to the annexin family. In terms of assembly, interacts with PDCD6. Isoform 1 is expressed in brain, heart and skeletal muscle. Isoform 2 is more abundant in liver, lung, kidney, spleen, fibroblasts and placenta.

Calcium/phospholipid-binding protein which promotes membrane fusion and is involved in exocytosis. This chain is Annexin A7 (ANXA7), found in Homo sapiens (Human).